Consider the following 161-residue polypeptide: Nucleotide-binding protein Sama_2557 (161 aa).

The protein belongs to the YajQ family.

Its function is as follows. Nucleotide-binding protein. This chain is Nucleotide-binding protein Sama_2557, found in Shewanella amazonensis (strain ATCC BAA-1098 / SB2B).